Reading from the N-terminus, the 541-residue chain is Developmental and secondary metabolism regulator VEL1 (541 aa).

A Velvet domain is found at 26–220; that stretch reads NRHLWYQLTV…ADQGCRVRIR (195 aa). A Nuclear localization signal motif is present at residues 40 to 45; it reads ERARAC. 2 disordered regions span residues 222-447 and 464-483; these read DVRM…MPTQ and PIEA…TGGK. Over residues 230–244 the composition is skewed to basic and acidic residues; the sequence is GKGSGYDRREEEYAR. Residues 289-298 show a composition bias toward low complexity; it reads APSLPHAPSL. Pro residues-rich tracts occupy residues 299 to 314, 345 to 355, and 425 to 439; these read PHAP…PPAA, APIPPVTPTGP, and SPAP…PAPS. The PEST stretch occupies residues 444–472; it reads MPTQSSLAPLKIASLVSPLPPIEAQTEPL.

It belongs to the velvet family. VeA subfamily. Component of the heterotrimeric velvet complex composed of LAE1, VEL1 and VEL2; VEL1 acting as a bridging protein between LAE1 and VEL2.

The protein localises to the nucleus. Its subcellular location is the cytoplasm. Its function is as follows. Component of the velvet transcription factor complex that controls sexual/asexual developmental ratio in response to light, promoting sexual development in the darkness while stimulating asexual sporulation under illumination. The velvet complex acts as a global regulator for secondary metabolite gene expression. Controls the expression of the gliotoxin gene cluster. Plays a key role in mycoparasitism. In Hypocrea virens (strain Gv29-8 / FGSC 10586) (Gliocladium virens), this protein is Developmental and secondary metabolism regulator VEL1.